The following is an 85-amino-acid chain: U4-theraphotoxin-Hhn1a (85 aa).

The first 22 residues, 1-22 (MKVTLIAILTCAAVLVLRTTAA), serve as a signal peptide directing secretion. A propeptide spanning residues 23–48 (EELEAESQLMEVGMPDTELAAVDEER) is cleaved from the precursor. 3 disulfides stabilise this stretch: cysteine 52–cysteine 66, cysteine 56–cysteine 77, and cysteine 71–cysteine 82.

This sequence belongs to the neurotoxin 12 (Hwtx-2) family. 02 (Hwtx-2) subfamily. Monomer. In terms of tissue distribution, expressed by the venom gland.

It is found in the secreted. Functionally, neurotoxin active on both insects and mammals. The protein is U4-theraphotoxin-Hhn1a of Cyriopagopus hainanus (Chinese bird spider).